The sequence spans 275 residues: Formamidopyrimidine-DNA glycosylase (275 aa).

P2 functions as the Schiff-base intermediate with DNA in the catalytic mechanism. The active-site Proton donor is E3. K58 (proton donor; for beta-elimination activity) is an active-site residue. H93, R111, and R156 together coordinate DNA. The FPG-type zinc-finger motif lies at 241–275 (FVYDRAGQPCRVCGTPIRQIVQGQRSTYYCPTCQR). R265 functions as the Proton donor; for delta-elimination activity in the catalytic mechanism.

The protein belongs to the FPG family. Monomer. Requires Zn(2+) as cofactor.

It catalyses the reaction Hydrolysis of DNA containing ring-opened 7-methylguanine residues, releasing 2,6-diamino-4-hydroxy-5-(N-methyl)formamidopyrimidine.. The catalysed reaction is 2'-deoxyribonucleotide-(2'-deoxyribose 5'-phosphate)-2'-deoxyribonucleotide-DNA = a 3'-end 2'-deoxyribonucleotide-(2,3-dehydro-2,3-deoxyribose 5'-phosphate)-DNA + a 5'-end 5'-phospho-2'-deoxyribonucleoside-DNA + H(+). Functionally, involved in base excision repair of DNA damaged by oxidation or by mutagenic agents. Acts as a DNA glycosylase that recognizes and removes damaged bases. Has a preference for oxidized purines, such as 7,8-dihydro-8-oxoguanine (8-oxoG). Has AP (apurinic/apyrimidinic) lyase activity and introduces nicks in the DNA strand. Cleaves the DNA backbone by beta-delta elimination to generate a single-strand break at the site of the removed base with both 3'- and 5'-phosphates. This chain is Formamidopyrimidine-DNA glycosylase, found in Burkholderia cenocepacia (strain ATCC BAA-245 / DSM 16553 / LMG 16656 / NCTC 13227 / J2315 / CF5610) (Burkholderia cepacia (strain J2315)).